The primary structure comprises 342 residues: Phosphate acyltransferase (342 aa).

It belongs to the PlsX family. Homodimer. Probably interacts with PlsY.

Its subcellular location is the cytoplasm. The enzyme catalyses a fatty acyl-[ACP] + phosphate = an acyl phosphate + holo-[ACP]. It functions in the pathway lipid metabolism; phospholipid metabolism. Catalyzes the reversible formation of acyl-phosphate (acyl-PO(4)) from acyl-[acyl-carrier-protein] (acyl-ACP). This enzyme utilizes acyl-ACP as fatty acyl donor, but not acyl-CoA. This chain is Phosphate acyltransferase, found in Shewanella sp. (strain ANA-3).